Here is a 347-residue protein sequence, read N- to C-terminus: Isopentenyl-diphosphate delta-isomerase (347 aa).

A substrate-binding site is contributed by 5–6 (RK). Residues S61, 62–64 (SMT), S92, and N120 contribute to the FMN site. Residue 92 to 94 (SMR) participates in substrate binding. Position 159 (Q159) interacts with substrate. Position 160 (E160) interacts with Mg(2+). FMN-binding positions include K189, S214, T219, 269–271 (GLR), and 290–291 (AR).

The protein belongs to the IPP isomerase type 2 family. As to quaternary structure, homooctamer. Dimer of tetramers. FMN is required as a cofactor. It depends on NADPH as a cofactor. Requires Mg(2+) as cofactor.

It is found in the cytoplasm. The catalysed reaction is isopentenyl diphosphate = dimethylallyl diphosphate. Involved in the biosynthesis of isoprenoids. Catalyzes the 1,3-allylic rearrangement of the homoallylic substrate isopentenyl (IPP) to its allylic isomer, dimethylallyl diphosphate (DMAPP). In Thermoplasma volcanium (strain ATCC 51530 / DSM 4299 / JCM 9571 / NBRC 15438 / GSS1), this protein is Isopentenyl-diphosphate delta-isomerase.